The sequence spans 524 residues: Sexual development regulator velC (524 aa).

Disordered stretches follow at residues 114–195, 322–349, 380–413, and 503–524; these read NRVL…PVHS, PGSGSGAGSSDTNTNSNDKSRHESMSSY, VDEEPDPNTAPAHPSSTDDSTYDASPRTVTHRFR, and GMGKGRRVGIGSSKVSSRARVE. Polar residues-rich tracts occupy residues 131–153 and 178–195; these read TTGSLAQYSIQRPSTSRNMENAG and LDSQYSGSTTAFPSPVHS. The Velvet domain maps to 248–500; the sequence is SSSSRYRLFI…ELGFVELKTR (253 aa). The span at 393-402 shows a compositional bias: polar residues; that stretch reads PSSTDDSTYD.

It belongs to the velvet family. VelC subfamily. In terms of assembly, interacts with vosA.

Its subcellular location is the nucleus. Functionally, velvet-domain-containing protein that acts as a positive regulator of sexual development. Positively regulates the production of the sexual fruiting bodies called cleistothecia. This Emericella nidulans (strain FGSC A4 / ATCC 38163 / CBS 112.46 / NRRL 194 / M139) (Aspergillus nidulans) protein is Sexual development regulator velC.